The primary structure comprises 187 residues: UPF0301 protein VP2612 (187 aa).

The protein belongs to the UPF0301 (AlgH) family.

This is UPF0301 protein VP2612 from Vibrio parahaemolyticus serotype O3:K6 (strain RIMD 2210633).